A 621-amino-acid chain; its full sequence is Probable bifunctional dTTP/UTP pyrophosphatase/methyltransferase protein (621 aa).

Residues 11–223 (LHKRVVLASA…PPRPEDLRRS (213 aa)) are MAF-like. Phosphoserine is present on Ser-21. The active-site Proton acceptor; for pyrophosphatase activity is Asp-88. A Phosphoserine modification is found at Ser-228. The residue at position 234 (Thr-234) is a Phosphothreonine. The interval 235 to 279 (FEDLSDVEGGGSEPTQRDAGSRDEKAEAGEAGQATAEAECHRTRE) is disordered. A Phosphoserine modification is found at Ser-239. Residues 249-262 (TQRDAGSRDEKAEA) show a composition bias toward basic and acidic residues. Residues 277 to 621 (TRETLPPFPT…DAILATKVAP (345 aa)) are ASMT-like. Ser-421 is subject to Phosphoserine. Residues Asp-482, 508–510 (GDF), and Arg-525 contribute to the S-adenosyl-L-methionine site.

This sequence in the N-terminal section; belongs to the Maf family. YhdE subfamily. The protein in the C-terminal section; belongs to the class I-like SAM-binding methyltransferase superfamily. Cation-independent O-methyltransferase family. As to quaternary structure, homodimer. A divalent metal cation is required as a cofactor. In terms of tissue distribution, widely expressed. In adult, highly expressed in pancreas, placenta, fibroblast, thymus, prostate, testis, ovary and colon. Expressed at lower levels in spleen, small intestine and leukocytes. In fetus, expressed at high levels in the lung and kidney and at lower level in brain and liver.

The catalysed reaction is dTTP + H2O = dTMP + diphosphate + H(+). It carries out the reaction UTP + H2O = UMP + diphosphate + H(+). It catalyses the reaction CTP + H2O = CMP + diphosphate + H(+). The enzyme catalyses psi-UTP + H2O = psi-UMP + diphosphate + H(+). The catalysed reaction is 5-methyl-UTP + H2O = 5-methyl-UMP + diphosphate + H(+). It carries out the reaction 5-methyl-CTP + H2O = 5-methyl-CMP + diphosphate + H(+). Functionally, nucleoside triphosphate pyrophosphatase that hydrolyzes dTTP and UTP. Can also hydrolyze CTP and the modified nucleotides pseudo-UTP, 5-methyl-UTP (m(5)UTP) and 5-methyl-CTP (m(5)CTP). Has weak activity with dCTP, 8-oxo-GTP and N(4)-methyl-dCTP. May have a dual role in cell division arrest and in preventing the incorporation of modified nucleotides into cellular nucleic acids. In addition, the presence of the putative catalytic domain of S-adenosyl-L-methionine binding in the C-terminal region argues for a methyltransferase activity. The polypeptide is Probable bifunctional dTTP/UTP pyrophosphatase/methyltransferase protein (ASMTL) (Homo sapiens (Human)).